The sequence spans 296 residues: Bifunctional protein FolD (296 aa).

NADP(+) contacts are provided by residues 170–172 and serine 195; that span reads GRS.

It belongs to the tetrahydrofolate dehydrogenase/cyclohydrolase family. As to quaternary structure, homodimer.

It catalyses the reaction (6R)-5,10-methylene-5,6,7,8-tetrahydrofolate + NADP(+) = (6R)-5,10-methenyltetrahydrofolate + NADPH. It carries out the reaction (6R)-5,10-methenyltetrahydrofolate + H2O = (6R)-10-formyltetrahydrofolate + H(+). It participates in one-carbon metabolism; tetrahydrofolate interconversion. In terms of biological role, catalyzes the oxidation of 5,10-methylenetetrahydrofolate to 5,10-methenyltetrahydrofolate and then the hydrolysis of 5,10-methenyltetrahydrofolate to 10-formyltetrahydrofolate. The protein is Bifunctional protein FolD of Rhodospirillum rubrum (strain ATCC 11170 / ATH 1.1.1 / DSM 467 / LMG 4362 / NCIMB 8255 / S1).